The following is a 120-amino-acid chain: Large ribosomal subunit protein uL24 (120 aa).

This sequence belongs to the universal ribosomal protein uL24 family. Part of the 50S ribosomal subunit.

In terms of biological role, one of two assembly initiator proteins, it binds directly to the 5'-end of the 23S rRNA, where it nucleates assembly of the 50S subunit. Functionally, located at the polypeptide exit tunnel on the outside of the subunit. This is Large ribosomal subunit protein uL24 from Archaeoglobus fulgidus (strain ATCC 49558 / DSM 4304 / JCM 9628 / NBRC 100126 / VC-16).